Reading from the N-terminus, the 436-residue chain is Trigger factor (436 aa).

Residues 161 to 246 (EDQLNIDFVG…VNTVSEPKLP (86 aa)) enclose the PPIase FKBP-type domain.

The protein belongs to the FKBP-type PPIase family. Tig subfamily.

It is found in the cytoplasm. It catalyses the reaction [protein]-peptidylproline (omega=180) = [protein]-peptidylproline (omega=0). Functionally, involved in protein export. Acts as a chaperone by maintaining the newly synthesized protein in an open conformation. Functions as a peptidyl-prolyl cis-trans isomerase. The polypeptide is Trigger factor (Pseudomonas fluorescens (strain Pf0-1)).